The following is a 158-amino-acid chain: MDLSTADLADREGPSVRSCDVQLRNYGGRAVFSGRIRTVRCFQDNALLKQVLSGPGEGDVLVVDGGGSVHTALIGDLIAELGRSNGWSGVVVHGAVRDSAVLAGMEFGVKALGTNPRKSTKTGEGVLDEVVSFGGVDFVPGEHLVSDTDGIVVVASAD.

Substrate-binding positions include 75 to 78 (GDLI) and Arg-97. Asp-98 contributes to the a divalent metal cation binding site.

The protein belongs to the class II aldolase/RraA-like family. In terms of assembly, homotrimer. It depends on a divalent metal cation as a cofactor.

It carries out the reaction 4-hydroxy-4-methyl-2-oxoglutarate = 2 pyruvate. It catalyses the reaction oxaloacetate + H(+) = pyruvate + CO2. Its function is as follows. Catalyzes the aldol cleavage of 4-hydroxy-4-methyl-2-oxoglutarate (HMG) into 2 molecules of pyruvate. Also contains a secondary oxaloacetate (OAA) decarboxylase activity due to the common pyruvate enolate transition state formed following C-C bond cleavage in the retro-aldol and decarboxylation reactions. This chain is Putative 4-hydroxy-4-methyl-2-oxoglutarate aldolase, found in Saccharopolyspora erythraea (strain ATCC 11635 / DSM 40517 / JCM 4748 / NBRC 13426 / NCIMB 8594 / NRRL 2338).